The following is a 127-amino-acid chain: Venom protein family 16 protein 1 (127 aa).

The first 18 residues, M1–S18, serve as a signal peptide directing secretion.

Expressed by the venom gland (anterior main gland) (at protein level).

The protein localises to the secreted. This Platymeris rhadamanthus (Red spot assassin bug) protein is Venom protein family 16 protein 1.